The sequence spans 476 residues: Aspartyl/glutamyl-tRNA(Asn/Gln) amidotransferase subunit B (476 aa).

This sequence belongs to the GatB/GatE family. GatB subfamily. As to quaternary structure, heterotrimer of A, B and C subunits.

The catalysed reaction is L-glutamyl-tRNA(Gln) + L-glutamine + ATP + H2O = L-glutaminyl-tRNA(Gln) + L-glutamate + ADP + phosphate + H(+). The enzyme catalyses L-aspartyl-tRNA(Asn) + L-glutamine + ATP + H2O = L-asparaginyl-tRNA(Asn) + L-glutamate + ADP + phosphate + 2 H(+). Functionally, allows the formation of correctly charged Asn-tRNA(Asn) or Gln-tRNA(Gln) through the transamidation of misacylated Asp-tRNA(Asn) or Glu-tRNA(Gln) in organisms which lack either or both of asparaginyl-tRNA or glutaminyl-tRNA synthetases. The reaction takes place in the presence of glutamine and ATP through an activated phospho-Asp-tRNA(Asn) or phospho-Glu-tRNA(Gln). The polypeptide is Aspartyl/glutamyl-tRNA(Asn/Gln) amidotransferase subunit B (Laribacter hongkongensis (strain HLHK9)).